Reading from the N-terminus, the 323-residue chain is Lipoyl synthase (323 aa).

[4Fe-4S] cluster-binding residues include C65, C70, C76, C91, C95, C98, and S304. One can recognise a Radical SAM core domain in the interval 77–293; the sequence is FNNGTATFMI…KKEALSIGFT (217 aa).

This sequence belongs to the radical SAM superfamily. Lipoyl synthase family. It depends on [4Fe-4S] cluster as a cofactor.

The protein resides in the cytoplasm. It carries out the reaction [[Fe-S] cluster scaffold protein carrying a second [4Fe-4S](2+) cluster] + N(6)-octanoyl-L-lysyl-[protein] + 2 oxidized [2Fe-2S]-[ferredoxin] + 2 S-adenosyl-L-methionine + 4 H(+) = [[Fe-S] cluster scaffold protein] + N(6)-[(R)-dihydrolipoyl]-L-lysyl-[protein] + 4 Fe(3+) + 2 hydrogen sulfide + 2 5'-deoxyadenosine + 2 L-methionine + 2 reduced [2Fe-2S]-[ferredoxin]. The protein operates within protein modification; protein lipoylation via endogenous pathway; protein N(6)-(lipoyl)lysine from octanoyl-[acyl-carrier-protein]: step 2/2. Catalyzes the radical-mediated insertion of two sulfur atoms into the C-6 and C-8 positions of the octanoyl moiety bound to the lipoyl domains of lipoate-dependent enzymes, thereby converting the octanoylated domains into lipoylated derivatives. This Buchnera aphidicola subsp. Acyrthosiphon pisum (strain 5A) protein is Lipoyl synthase.